Reading from the N-terminus, the 428-residue chain is Tol-Pal system protein TolB (428 aa).

Positions 1–24 are cleaved as a signal peptide; it reads MPSLKTLLRGVLVAAMLVAGSARA.

The protein belongs to the TolB family. The Tol-Pal system is composed of five core proteins: the inner membrane proteins TolA, TolQ and TolR, the periplasmic protein TolB and the outer membrane protein Pal. They form a network linking the inner and outer membranes and the peptidoglycan layer.

Its subcellular location is the periplasm. Its function is as follows. Part of the Tol-Pal system, which plays a role in outer membrane invagination during cell division and is important for maintaining outer membrane integrity. The sequence is that of Tol-Pal system protein TolB from Chromobacterium violaceum (strain ATCC 12472 / DSM 30191 / JCM 1249 / CCUG 213 / NBRC 12614 / NCIMB 9131 / NCTC 9757 / MK).